A 302-amino-acid chain; its full sequence is Sulfate adenylyltransferase subunit 2 (302 aa).

It belongs to the PAPS reductase family. CysD subfamily. In terms of assembly, heterodimer composed of CysD, the smaller subunit, and CysN.

It carries out the reaction sulfate + ATP + H(+) = adenosine 5'-phosphosulfate + diphosphate. It participates in sulfur metabolism; hydrogen sulfide biosynthesis; sulfite from sulfate: step 1/3. With CysN forms the ATP sulfurylase (ATPS) that catalyzes the adenylation of sulfate producing adenosine 5'-phosphosulfate (APS) and diphosphate, the first enzymatic step in sulfur assimilation pathway. APS synthesis involves the formation of a high-energy phosphoric-sulfuric acid anhydride bond driven by GTP hydrolysis by CysN coupled to ATP hydrolysis by CysD. This chain is Sulfate adenylyltransferase subunit 2, found in Xanthomonas campestris pv. campestris (strain 8004).